The primary structure comprises 274 residues: MHFSKMHGLGNDFVVVDAVTQNVFFPEEVIKKLADRHRGIGFDQLLLVEPPYDPELDFHYRIFNADGSEVAQCGNGARCFARFVTLKGLTNKKDIAVSTAKGRMVLTVKDDGQIRVNMGEPIWEPAKIPFNANKFEKNYILRTDIQTVLCGAVSMGNPHCVIQVEDIKTANVAQLGPLLESHERFPERVNAGFMQVIDRHHIKLRVYERGAGETQACGSGACAAAAVGIMQGLLDSPVQVDLPGGSLIIEWDGEGHPLYMTGDATHIYDGVIKL.

Substrate contacts are provided by N11, Q44, and N64. C73 acts as the Proton donor in catalysis. Substrate contacts are provided by residues 74–75 (GN), N157, N190, and 208–209 (ER). Residue C217 is the Proton acceptor of the active site. 218–219 (GS) contacts substrate.

This sequence belongs to the diaminopimelate epimerase family. As to quaternary structure, homodimer.

It is found in the cytoplasm. The catalysed reaction is (2S,6S)-2,6-diaminopimelate = meso-2,6-diaminopimelate. The protein operates within amino-acid biosynthesis; L-lysine biosynthesis via DAP pathway; DL-2,6-diaminopimelate from LL-2,6-diaminopimelate: step 1/1. Catalyzes the stereoinversion of LL-2,6-diaminopimelate (L,L-DAP) to meso-diaminopimelate (meso-DAP), a precursor of L-lysine and an essential component of the bacterial peptidoglycan. The sequence is that of Diaminopimelate epimerase from Actinobacillus succinogenes (strain ATCC 55618 / DSM 22257 / CCUG 43843 / 130Z).